The chain runs to 207 residues: Small ribosomal subunit protein uS4 (207 aa).

The region spanning 98-164 is the S4 RNA-binding domain; it reads RRLDNVVYRM…AKFKNLVEVN (67 aa).

The protein belongs to the universal ribosomal protein uS4 family. Part of the 30S ribosomal subunit. Contacts protein S5. The interaction surface between S4 and S5 is involved in control of translational fidelity.

Functionally, one of the primary rRNA binding proteins, it binds directly to 16S rRNA where it nucleates assembly of the body of the 30S subunit. Its function is as follows. With S5 and S12 plays an important role in translational accuracy. The polypeptide is Small ribosomal subunit protein uS4 (Clostridioides difficile (strain 630) (Peptoclostridium difficile)).